A 450-amino-acid polypeptide reads, in one-letter code: Phosphoglucosamine mutase (450 aa).

The active-site Phosphoserine intermediate is the serine 104. Residues serine 104, aspartate 241, aspartate 243, and aspartate 245 each contribute to the Mg(2+) site. Position 104 is a phosphoserine (serine 104).

It belongs to the phosphohexose mutase family. Mg(2+) serves as cofactor. Post-translationally, activated by phosphorylation.

It catalyses the reaction alpha-D-glucosamine 1-phosphate = D-glucosamine 6-phosphate. Functionally, catalyzes the conversion of glucosamine-6-phosphate to glucosamine-1-phosphate. The chain is Phosphoglucosamine mutase from Renibacterium salmoninarum (strain ATCC 33209 / DSM 20767 / JCM 11484 / NBRC 15589 / NCIMB 2235).